Consider the following 350-residue polypeptide: Protein-arginine kinase (350 aa).

The Phosphagen kinase C-terminal domain occupies 21–253 (IVISSRIRLA…VRLADQEREA (233 aa)). Residues 24–28 (SSRIR), H90, R124, 175–179 (RASTM), and 206–211 (RGLYGE) contribute to the ATP site. The RDXXRA motif of the pArg binding pocket involved in allosteric regulation motif lies at 336–341 (RDVHRA).

The protein belongs to the ATP:guanido phosphotransferase family.

It carries out the reaction L-arginyl-[protein] + ATP = N(omega)-phospho-L-arginyl-[protein] + ADP + H(+). Appears to be allosterically activated by the binding of pArg-containing polypeptides to the pArg-binding pocket localized in the C-terminal domain of McsB. Its function is as follows. Catalyzes the specific phosphorylation of arginine residues in proteins. The chain is Protein-arginine kinase from Moorella thermoacetica (strain ATCC 39073 / JCM 9320).